Reading from the N-terminus, the 226-residue chain is Pathogenesis-related protein R minor form (226 aa).

The first 25 residues, 1–25 (MNFLKSFPFYAFLCFGQYFVAVTHA), serve as a signal peptide directing secretion. 8 disulfides stabilise this stretch: cysteine 34–cysteine 225, cysteine 75–cysteine 85, cysteine 90–cysteine 96, cysteine 140–cysteine 214, cysteine 145–cysteine 197, cysteine 153–cysteine 163, cysteine 167–cysteine 176, and cysteine 177–cysteine 184.

Belongs to the thaumatin family.

The protein localises to the vacuole. In Nicotiana tabacum (Common tobacco), this protein is Pathogenesis-related protein R minor form.